The chain runs to 299 residues: tRNA dimethylallyltransferase 2 (299 aa).

9–16 lines the ATP pocket; the sequence is GPTGVGKT. 11 to 16 is a binding site for substrate; the sequence is TGVGKT. Residues 34 to 37 form an interaction with substrate tRNA region; the sequence is DSRQ.

This sequence belongs to the IPP transferase family. As to quaternary structure, monomer. Mg(2+) serves as cofactor.

It catalyses the reaction adenosine(37) in tRNA + dimethylallyl diphosphate = N(6)-dimethylallyladenosine(37) in tRNA + diphosphate. In terms of biological role, catalyzes the transfer of a dimethylallyl group onto the adenine at position 37 in tRNAs that read codons beginning with uridine, leading to the formation of N6-(dimethylallyl)adenosine (i(6)A). This is tRNA dimethylallyltransferase 2 from Parabacteroides distasonis (strain ATCC 8503 / DSM 20701 / CIP 104284 / JCM 5825 / NCTC 11152).